A 333-amino-acid chain; its full sequence is Olfactory receptor 1078 (333 aa).

At 1–25 (MDSSNRTRVSEFLLLGFVENKDLQP) the chain is on the extracellular side. N5 is a glycosylation site (N-linked (GlcNAc...) asparagine). Residues 26–50 (LIYGLFLSMYLVTVIGNISIIVAII) traverse the membrane as a helical segment. Over 51–57 (SDPCLHT) the chain is Cytoplasmic. A helical transmembrane segment spans residues 58-79 (PMYFFLSNLSFVDICFISTTVP). The Extracellular portion of the chain corresponds to 80–100 (KMLVNIQTQNNVITYAGCITQ). The cysteines at positions 97 and 189 are disulfide-linked. A helical transmembrane segment spans residues 101–120 (IYFFLLFVELDNFLLTIMAY). At 121-139 (DRYVAICHPMHYTVIMNYK) the chain is on the cytoplasmic side. The chain crosses the membrane as a helical span at residues 140–158 (LCGFLVLVSWIVSVLHALF). The Extracellular segment spans residues 159–196 (QSLMMLALPFCTHLEIPHYFCEPNQVIQLTCSDAFLND). A helical transmembrane segment spans residues 197 to 219 (LVIYFTLVLLATVPLAGIFYSYF). The Cytoplasmic portion of the chain corresponds to 220–236 (KIVSSICAISSVHGKYK). A helical transmembrane segment spans residues 237–260 (AFSTCASHLSVVSLFYCTGLGVYL). Topologically, residues 261 to 272 (SSAANNSSQASA) are extracellular. A helical transmembrane segment spans residues 273-292 (TASVMYTVVTPMVNPFIYSL). Residues 293 to 333 (RNKDVKSVLKKTLCEEVIRSPPSLLHFFLVLCHLPCFIFCY) are Cytoplasmic-facing.

It belongs to the G-protein coupled receptor 1 family. Olfactory epithelium.

The protein resides in the cell membrane. Its function is as follows. Odorant receptor. In Rattus norvegicus (Rat), this protein is Olfactory receptor 1078 (Olr1078).